Reading from the N-terminus, the 370-residue chain is Death-associated protein kinase 2 (370 aa).

Residues 23–285 enclose the Protein kinase domain; sequence YDIGEELGSG…IQEALRHPWI (263 aa). ATP is bound by residues 29–37 and lysine 52; that span reads LGSGQFAIV. The active-site Proton acceptor is the aspartate 149. The interval 287–354 is calmodulin-binding; sequence PVDTQQAMVR…RNCESDTEEN (68 aa). Positions 292-301 are autoinhibitory domain; it reads QAMVRRESVV. Residue serine 299 is modified to Phosphoserine. The residue at position 318 (serine 318) is a Phosphoserine; by autocatalysis. Residue serine 349 is modified to Phosphoserine. Phosphothreonine is present on threonine 369.

The protein belongs to the protein kinase superfamily. CAMK Ser/Thr protein kinase family. DAP kinase subfamily. As to quaternary structure, homodimer in its autoinhibited state. Active as monomer. Interacts with 14-3-3 proteins YWHAB, YWHAE, YWHAG, YWHAH, YWHAQ, YWHAZ and SFN; the interaction requires DAPK2 phosphorylation at Thr-369 and suppresses DAPK2 kinase activity and DAPK2-induced apoptosis. Requires Mg(2+) as cofactor. Autophosphorylation at Ser-318 inhibits its catalytic activity. Dephosphorylated at Ser-318 in response to activated Fas and TNF-alpha receptors. In terms of tissue distribution, expressed in peritubular interstitial cells of the renal cortex. Isoform 1 is found in the adult brain while isoform 2 is expressed in brains of embryos and young mice (at protein level).

It localises to the cytoplasm. The protein resides in the cytoplasmic vesicle. It is found in the autophagosome lumen. The catalysed reaction is L-seryl-[protein] + ATP = O-phospho-L-seryl-[protein] + ADP + H(+). The enzyme catalyses L-threonyl-[protein] + ATP = O-phospho-L-threonyl-[protein] + ADP + H(+). With respect to regulation, activated by Ca(2+)/calmodulin. Regulated by a double locking mechanism, involving autophosphorylation at Ser-318, calmodulin binding, and dimerization. In the inactive state, Ser-318 is phosphorylated, and the kinase is dimeric. Activation involves: dephosphorylation at Ser-318, release-of-autoinhibition mechanism where calmodulin binding induces a conformational change that relieves the steric block of the active site by the autoinhibitory domain, and generation of the monomeric active form of the kinase. Its function is as follows. Calcium/calmodulin-dependent serine/threonine kinase involved in multiple cellular signaling pathways that trigger cell survival, apoptosis, and autophagy. Capable of regulating both type I apoptotic and type II autophagic cell death signals. The former involves caspase activation, chromatin and mitochondrial condensation while the latter involves caspase-independent cell death in conjunction with accumulation of mature autophagic vesicles, plasma membrane blebs, and nuclear condensation without DNA degradation. Mediator of anoikis and a suppressor of beta-catenin-dependent anchorage-independent growth of malignant epithelial cells. May play a role in granulocytic maturation. Regulates granulocytes motility by controlling cell spreading and polarization. This chain is Death-associated protein kinase 2 (Dapk2), found in Mus musculus (Mouse).